The following is a 169-amino-acid chain: MKGSRIELGDVTPHNIKQLKRLNQVIFPVSYNDKFYKDVLEVGELAKLAYFNDIAVGAVCCRVDHSQNQKRLYIMTLGCLAPYRRLGIGTKMLNHVLNICEKDGTFDNIYLHVQISNESAIDFYRKFGFEIIETKKNYYKRIEPADAHVLQKNLKVPSGQNADVQKTDN.

In terms of domain architecture, N-acetyltransferase spans 6–155 (IELGDVTPHN…DAHVLQKNLK (150 aa)). At T12 the chain carries Phosphothreonine. A substrate-binding site is contributed by Y31. 2 positions are modified to N6-acetyllysine: K34 and K37. Residue Y73 is part of the active site. Residue M75 participates in substrate binding. 77–90 (LGCLAPYRRLGIGT) serves as a coordination point for acetyl-CoA. Y110 is subject to Phosphotyrosine. H112 is a catalytic residue. 117–126 (NESAIDFYRK) lines the CoA pocket. Residues 138 to 141 (YYKR) form a substrate region. The residue at position 140 (K140) is an N6-acetyllysine.

This sequence belongs to the acetyltransferase family. GNAT subfamily. In terms of assembly, component of the N-terminal acetyltransferase E (NatE) complex at least composed of NAA10, NAA15 and NAA50. Interacts with NAA10. Interacts with NAA15. Predominantly interacts with NAA15 in the N-terminal acetyltransferase A complex (NatA complex); the interactions reduce the acetylation activity of the NatA complex. Component of the N-terminal acetyltransferase E (NatE)/HYPK complex at least composed of NAA10, NAA15, NAA50 and HYPK. Within the complex interacts with NAA15. Its capacity to interact with the NatA complex is reduced by HYPK. Interacts with NAA35.

Its subcellular location is the cytoplasm. The protein localises to the nucleus. It carries out the reaction N-terminal L-methionyl-L-alanyl-[protein] + acetyl-CoA = N-terminal N(alpha)-acetyl-L-methionyl-L-alanyl-[protein] + CoA + H(+). The catalysed reaction is N-terminal L-methionyl-L-seryl-[protein] + acetyl-CoA = N-terminal N(alpha)-acetyl-L-methionyl-L-seryl-[protein] + CoA + H(+). The enzyme catalyses N-terminal L-methionyl-L-valyl-[protein] + acetyl-CoA = N-terminal N(alpha)-acetyl-L-methionyl-L-valyl-[protein] + CoA + H(+). It catalyses the reaction N-terminal L-methionyl-L-threonyl-[protein] + acetyl-CoA = N-terminal N(alpha)-acetyl-L-methionyl-L-threonyl-[protein] + CoA + H(+). It carries out the reaction N-terminal L-methionyl-L-lysyl-[protein] + acetyl-CoA = N-terminal N(alpha)-acetyl-L-methionyl-L-lysyl-[protein] + CoA + H(+). The catalysed reaction is N-terminal L-methionyl-L-leucyl-[protein] + acetyl-CoA = N-terminal N(alpha)-acetyl-L-methionyl-L-leucyl-[protein] + CoA + H(+). The enzyme catalyses N-terminal L-methionyl-L-phenylalanyl-[protein] + acetyl-CoA = N-terminal N(alpha)-acetyl-L-methionyl-L-phenylalanyl-[protein] + CoA + H(+). It catalyses the reaction N-terminal L-methionyl-L-tyrosyl-[protein] + acetyl-CoA = N-terminal N(alpha)-acetyl-L-methionyl-L-tyrosyl-[protein] + CoA + H(+). Functionally, N-alpha-acetyltransferase that acetylates the N-terminus of proteins that retain their initiating methionine. Has a broad substrate specificity: able to acetylate the initiator methionine of most peptides, except for those with a proline in second position. Also displays N-epsilon-acetyltransferase activity by mediating acetylation of the side chain of specific lysines on proteins. Autoacetylates in vivo. The relevance of N-epsilon-acetyltransferase activity is however unclear: able to acetylate H4 in vitro, but this result has not been confirmed in vivo. Component of N-alpha-acetyltransferase complexes containing NAA10 and NAA15, which has N-alpha-acetyltransferase activity. Does not influence the acetyltransferase activity of NAA10. However, it negatively regulates the N-alpha-acetyltransferase activity of the N-terminal acetyltransferase A complex (also called the NatA complex). The multiprotein complexes probably constitute the major contributor for N-terminal acetylation at the ribosome exit tunnel, with NAA10 acetylating all amino termini that are devoid of methionine and NAA50 acetylating other peptides. Required for sister chromatid cohesion during mitosis by promoting binding of CDCA5/sororin to cohesin: may act by counteracting the function of NAA10. This is N-alpha-acetyltransferase 50 (NAA50) from Bos taurus (Bovine).